Here is a 352-residue protein sequence, read N- to C-terminus: Elongation factor Ts (352 aa).

The tract at residues 81–84 is involved in Mg(2+) ion dislocation from EF-Tu; it reads TDFV.

This sequence belongs to the EF-Ts family.

It localises to the cytoplasm. Associates with the EF-Tu.GDP complex and induces the exchange of GDP to GTP. It remains bound to the aminoacyl-tRNA.EF-Tu.GTP complex up to the GTP hydrolysis stage on the ribosome. The sequence is that of Elongation factor Ts from Campylobacter hominis (strain ATCC BAA-381 / DSM 21671 / CCUG 45161 / LMG 19568 / NCTC 13146 / CH001A).